Here is a 173-residue protein sequence, read N- to C-terminus: Telomerase RNA component interacting RNase (173 aa).

Over residues 1–12 (MAARGRRAEPPG) the composition is skewed to basic and acidic residues. Residues 1–119 (MAARGRRAEP…LSFVGKRRGG (119 aa)) are disordered. Composition is skewed to low complexity over residues 14-23 (EAPGPAGSGR) and 43-52 (SGSSPVSSGV). Over residues 64–79 (LFKRKMEEEQRQRQEE) the composition is skewed to basic and acidic residues. Residues 80–90 (PPPGPQRPDPP) show a composition bias toward pro residues. The residue at position 143 (K143) is an N6-acetyllysine.

Part of the telomerase RNA 3' end complex which contains about 488 proteins.

In terms of biological role, exoribonuclease that is part of the telomerase RNA 3' end processing complex and which has the ability to cleave all four unpaired RNA nucleotides from the 5' end or 3' end with higher efficiency for purine bases. The sequence is that of Telomerase RNA component interacting RNase from Mus musculus (Mouse).